The sequence spans 194 residues: Mersacidin decarboxylase (194 aa).

Residue His-75 is part of the active site.

This sequence belongs to the HFCD (homooligomeric flavin containing Cys decarboxylase) superfamily. Homododecamer. FAD is required as a cofactor.

It functions in the pathway antibiotic biosynthesis; mersacidin biosynthesis. Its function is as follows. Catalyzes the oxidative decarboxylation of the C-terminal cysteine residue of mersacidin to an aminoenethiol residue. The chain is Mersacidin decarboxylase (mrsD) from Bacillus sp. (strain HIL-Y85/54728).